The chain runs to 303 residues: ATP-dependent (S)-NAD(P)H-hydrate dehydratase (303 aa).

The 288-residue stretch at 12 to 299 folds into the YjeF C-terminal domain; it reads QQQLVCSVIP…AEVRTAFSML (288 aa). Residues glycine 106 and 158–164 each bind (6S)-NADPHX; that span reads NAVELDR. ATP contacts are provided by residues 194-198 and 213-222; these read KGSED and GSPRRCGGQG. Residue aspartate 223 coordinates (6S)-NADPHX.

It belongs to the NnrD/CARKD family. It depends on Mg(2+) as a cofactor.

It carries out the reaction (6S)-NADHX + ATP = ADP + phosphate + NADH + H(+). The catalysed reaction is (6S)-NADPHX + ATP = ADP + phosphate + NADPH + H(+). Catalyzes the dehydration of the S-form of NAD(P)HX at the expense of ATP, which is converted to ADP. Together with NAD(P)HX epimerase, which catalyzes the epimerization of the S- and R-forms, the enzyme allows the repair of both epimers of NAD(P)HX, a damaged form of NAD(P)H that is a result of enzymatic or heat-dependent hydration. This chain is ATP-dependent (S)-NAD(P)H-hydrate dehydratase, found in Ixodes scapularis (Black-legged tick).